A 303-amino-acid chain; its full sequence is Nucleotide-binding protein Acry_0446 (303 aa).

10–17 (GLSGAGRN) contacts ATP. Residue 54 to 57 (DART) coordinates GTP.

Belongs to the RapZ-like family.

Displays ATPase and GTPase activities. The chain is Nucleotide-binding protein Acry_0446 from Acidiphilium cryptum (strain JF-5).